We begin with the raw amino-acid sequence, 181 residues long: ADP-ribosylation factor 1 (181 aa).

The N-myristoyl glycine moiety is linked to residue G2. GTP-binding positions include 24–31 (GLDAAGKT), 126–129 (NKQD), and A160.

Belongs to the small GTPase superfamily. Arf family. In terms of assembly, may interact with GTPase RAB5b.

It localises to the golgi apparatus membrane. The enzyme catalyses GTP + H2O = GDP + phosphate + H(+). Its activity is regulated as follows. Alternates between an inactive GDP-bound form and an active GTP-bound form. Intrinsic GTPase activity is almost undetectable in vitro. Activated by a guanine nucleotide-exchange factor (GEF) and inactivated by GTPase-activating protein ARFGAP1. Its function is as follows. Small GTPase involved in protein trafficking between different compartments. Modulates vesicle budding and uncoating within the Golgi complex. In its GTP-bound form, triggers the recruitment of coatomer proteins to the Golgi membrane. The hydrolysis of ARF1-bound GTP, which is mediated by ARFGAPs proteins, is required for dissociation of coat proteins from Golgi membranes and vesicles. Regulates the transport of N-acylated AK2 to the parasitophorous vacuole membrane. May be involved in the activation of lipid kinase PIP5K. The sequence is that of ADP-ribosylation factor 1 (ARF1) from Plasmodium falciparum (isolate NF54).